Reading from the N-terminus, the 339-residue chain is Lipopolysaccharide glucosyltransferase WaaO (339 aa).

UDP-binding positions include 34–39 and 131–132; these read GTDKNF and DA. Residues Asp-131 and Asp-133 each contribute to the Mg(2+) site. Short sequence motifs (DXD) lie at residues 131 to 133 and 220 to 222; these read DAD and DQD. His-265 is a Mg(2+) binding site. Residue 265–271 participates in UDP binding; it reads HYIGPTK.

This sequence belongs to the glycosyltransferase 8 family. Mg(2+) is required as a cofactor.

It carries out the reaction UDP-glucose + lipopolysaccharide = UDP + alpha-D-glucosyl-lipopolysaccharide.. It catalyses the reaction alpha-D-Gal-(1-&gt;6)-alpha-D-Glc-(1-&gt;3)-[L-alpha-D-Hep-(1-&gt;7)]-4-O-PO3(2-)-L-alpha-D-Hep-(1-&gt;3)-4-O-PO3(2-)-L-alpha-D-Hep-(1-&gt;5)-[alpha-Kdo-(2-&gt;4)]-alpha-Kdo-(2-&gt;6)-lipid A + UDP-alpha-D-glucose = alpha-D-Glc-(1-&gt;3)-[alpha-D-Gal-(1-&gt;6)]-alpha-D-Glc-(1-&gt;3)-[L-alpha-D-Hep-(1-&gt;7)]-4-O-PO3(2-)-L-alpha-D-Hep-(1-&gt;3)-4-O-PO3(2-)-L-alpha-D-Hep-(1-&gt;5)-[alpha-Kdo-(2-&gt;4)]-alpha-Kdo-(2-&gt;6)-lipid A + UDP + H(+). It participates in bacterial outer membrane biogenesis; LPS core biosynthesis. Glucosyltransferase involved in the biosynthesis of the core oligosaccharide region of lipopolysaccharide (LPS). Catalyzes the addition of a second glucose (glucose II) to the first outer-core glucose (glucose I). In vitro, can add multiple glucose residues to its lipid acceptor. Activity does not require the branched galactose added by WaaB, but it is higher in the presence of this branched galactose. In the absence of a lipid acceptor, can hydrolyze UDP-glucose, but not UDP-galactose. The sequence is that of Lipopolysaccharide glucosyltransferase WaaO from Escherichia coli (strain K12).